Here is a 390-residue protein sequence, read N- to C-terminus: Lipid-A-disaccharide synthase (390 aa).

The protein belongs to the LpxB family.

It carries out the reaction a lipid X + a UDP-2-N,3-O-bis[(3R)-3-hydroxyacyl]-alpha-D-glucosamine = a lipid A disaccharide + UDP + H(+). It functions in the pathway bacterial outer membrane biogenesis; LPS lipid A biosynthesis. Condensation of UDP-2,3-diacylglucosamine and 2,3-diacylglucosamine-1-phosphate to form lipid A disaccharide, a precursor of lipid A, a phosphorylated glycolipid that anchors the lipopolysaccharide to the outer membrane of the cell. This is Lipid-A-disaccharide synthase from Haemophilus influenzae (strain PittEE).